The chain runs to 388 residues: Isocitrate dehydrogenase [NAD] subunit 1, mitochondrial (388 aa).

The transit peptide at Met-1–Phe-35 directs the protein to the mitochondrion. Substrate is bound by residues Arg-137, Arg-168, and Asp-255. Asp-255 is a Mg(2+) binding site.

It belongs to the isocitrate and isopropylmalate dehydrogenases family. In terms of assembly, octamer of two non-identical subunits IDH1 and IDH2. Requires Mg(2+) as cofactor. Mn(2+) serves as cofactor.

The protein resides in the mitochondrion. It catalyses the reaction D-threo-isocitrate + NAD(+) = 2-oxoglutarate + CO2 + NADH. Its function is as follows. Performs an essential role in the oxidative function of the citric acid cycle. In Ajellomyces capsulatus (Darling's disease fungus), this protein is Isocitrate dehydrogenase [NAD] subunit 1, mitochondrial (IDH1).